A 260-amino-acid polypeptide reads, in one-letter code: 3'-5' ssDNA/RNA exonuclease TatD (260 aa).

Residues E91, H127, and H152 each contribute to the a divalent metal cation site.

This sequence belongs to the metallo-dependent hydrolases superfamily. TatD-type hydrolase family. TatD subfamily. In terms of assembly, monomer. Mg(2+) serves as cofactor.

The protein localises to the cytoplasm. 3'-5' exonuclease that prefers single-stranded DNA and RNA. May play a role in the H(2)O(2)-induced DNA damage repair. This is 3'-5' ssDNA/RNA exonuclease TatD from Enterobacter lignolyticus (strain SCF1).